The primary structure comprises 260 residues: Histidine-binding periplasmic protein (260 aa).

A signal peptide spans 1–22 (MKKLALSLSLVLAFSSATAAFA). C60 and C67 are disulfide-bonded. Residues S91, S92, S94, R99, T143, and D183 each contribute to the L-histidine site.

Belongs to the bacterial solute-binding protein 3 family. The complex is composed of two ATP-binding proteins (HisP), two transmembrane proteins (HisM and HisQ) and a solute-binding protein (HisJ).

It localises to the periplasm. Part of the ABC transporter complex HisPMQJ involved in histidine transport. Binds histidine. Interacts with HisQMP and stimulates ATPase activity of HisP, which results in histidine translocation. May have some additional function(s) in translocation that is independent of the stimulation of ATP hydrolysis. The protein is Histidine-binding periplasmic protein of Salmonella typhimurium (strain LT2 / SGSC1412 / ATCC 700720).